Consider the following 307-residue polypeptide: Protoheme IX farnesyltransferase (307 aa).

The next 9 membrane-spanning stretches (helical) occupy residues 33 to 53 (IGIV…AFYF), 62 to 82 (LHIV…SCSI), 111 to 131 (RVLW…LMTT), 132 to 152 (VTAA…YTLW), 159 to 179 (LNTV…WTAV), 185 to 205 (IVPL…FLAL), 229 to 249 (MTKR…FYLF), 251 to 271 (LGIP…LLGL), and 287 to 307 (FVYS…ATIW).

This sequence belongs to the UbiA prenyltransferase family. Protoheme IX farnesyltransferase subfamily. As to quaternary structure, interacts with CtaA.

The protein localises to the cell membrane. It catalyses the reaction heme b + (2E,6E)-farnesyl diphosphate + H2O = Fe(II)-heme o + diphosphate. The protein operates within porphyrin-containing compound metabolism; heme O biosynthesis; heme O from protoheme: step 1/1. Its function is as follows. Converts heme B (protoheme IX) to heme O by substitution of the vinyl group on carbon 2 of heme B porphyrin ring with a hydroxyethyl farnesyl side group. This Geobacillus thermodenitrificans (strain NG80-2) protein is Protoheme IX farnesyltransferase.